The chain runs to 257 residues: Pimeloyl-[acyl-carrier protein] methyl ester esterase (257 aa).

Positions 16 to 242 (LVLLHGWGLN…AAHAPFISHP (227 aa)) constitute an AB hydrolase-1 domain. Substrate contacts are provided by residues W22, 82 to 83 (SL), and 143 to 147 (FLGLQ). Residue S82 is the Nucleophile of the active site. Active-site residues include D207 and H235. H235 contributes to the substrate binding site.

It belongs to the AB hydrolase superfamily. Carboxylesterase BioH family. As to quaternary structure, monomer.

The protein resides in the cytoplasm. The catalysed reaction is 6-carboxyhexanoyl-[ACP] methyl ester + H2O = 6-carboxyhexanoyl-[ACP] + methanol + H(+). It participates in cofactor biosynthesis; biotin biosynthesis. The physiological role of BioH is to remove the methyl group introduced by BioC when the pimeloyl moiety is complete. It allows to synthesize pimeloyl-ACP via the fatty acid synthetic pathway through the hydrolysis of the ester bonds of pimeloyl-ACP esters. This Sodalis glossinidius (strain morsitans) protein is Pimeloyl-[acyl-carrier protein] methyl ester esterase.